The primary structure comprises 91 residues: MNKLINIGFGNVVNAGKIISVIRPEAAPVKRMVQNAKDSGSCVDATCGRKCKAVVVMETGQIVLSALLPETIANRVNQRESIESNEVFQAL.

This sequence belongs to the RemA family.

The polypeptide is Putative regulatory protein Cphy_2880 (Lachnoclostridium phytofermentans (strain ATCC 700394 / DSM 18823 / ISDg) (Clostridium phytofermentans)).